Here is a 170-residue protein sequence, read N- to C-terminus: Cyclic pyranopterin monophosphate synthase (170 aa).

Substrate-binding positions include 89–91 (LCH) and 125–126 (ME). Asp140 is an active-site residue.

The protein belongs to the MoaC family. As to quaternary structure, homohexamer; trimer of dimers.

The catalysed reaction is (8S)-3',8-cyclo-7,8-dihydroguanosine 5'-triphosphate = cyclic pyranopterin phosphate + diphosphate. It functions in the pathway cofactor biosynthesis; molybdopterin biosynthesis. Its function is as follows. Catalyzes the conversion of (8S)-3',8-cyclo-7,8-dihydroguanosine 5'-triphosphate to cyclic pyranopterin monophosphate (cPMP). In Streptomyces coelicolor (strain ATCC BAA-471 / A3(2) / M145), this protein is Cyclic pyranopterin monophosphate synthase.